The sequence spans 237 residues: MRKKLKWLSFLLGFIILLFLFKYQFSNNDSWKPWSLPLSGKIIYLDPGHGGPDGGAVGGKLLEKDVTLEVAFRVRDYLQEQGALVIMTRESDTDLAPEGTKGYSRRKAEDLRQRVKLINHSEAELYISIHLNAIPSQKWSGAQSFYYGKYAENEKVAKYIQDELRRNLENTTRKAKRIHGIYLMQNVTKPGALIEVGFLSNPSEATLLGKPKYQDKVASSIYKGILRYFTEKGDPPE.

Residues 1-27 form the signal peptide; it reads MRKKLKWLSFLLGFIILLFLFKYQFSN. The MurNAc-LAA domain occupies 43–226; it reads IYLDPGHGGP…VASSIYKGIL (184 aa).

Belongs to the N-acetylmuramoyl-L-alanine amidase 3 family.

It is found in the secreted. The enzyme catalyses Hydrolyzes the link between N-acetylmuramoyl residues and L-amino acid residues in certain cell-wall glycopeptides.. In terms of biological role, cleaves the peptide side chain from the N-acetylmuramic acid residues in peptidoglycan. This is a step in the formation of muramic delta-lactam residues in spore cortex. The polypeptide is Germination-specific N-acetylmuramoyl-L-alanine amidase (cwlD) (Bacillus subtilis (strain 168)).